The primary structure comprises 87 residues: Small ribosomal subunit protein uS19 (87 aa).

This sequence belongs to the universal ribosomal protein uS19 family.

Protein S19 forms a complex with S13 that binds strongly to the 16S ribosomal RNA. The chain is Small ribosomal subunit protein uS19 (rpsS) from Mycoplasma genitalium (strain ATCC 33530 / DSM 19775 / NCTC 10195 / G37) (Mycoplasmoides genitalium).